The sequence spans 1698 residues: Bromodomain adjacent to zinc finger domain protein 2A (1698 aa).

2 disordered regions span residues 240 to 262 and 352 to 387; these read QSTPNPLLPPDVSNLDDPSQLPS and VMQESASEMGEDPEGSKAEEPVSGPENVSQDEMTIE. The span at 377–387 shows a compositional bias: polar residues; the sequence is ENVSQDEMTIE. The MBD domain occupies 418–489; sequence IATPEQVCFP…EHFSFSPRMP (72 aa). Disordered regions lie at residues 524 to 550 and 610 to 653; these read RGRPRNLEKAKAKEQKAKRGRGRPPKV and EKEE…DRKL. A compositionally biased stretch (basic and acidic residues) spans 528–540; that stretch reads RNLEKAKAKEQKA. Positions 541 to 553 form a DNA-binding region, a.T hook 1; that stretch reads KRGRGRPPKVKMI. A coiled-coil region spans residues 579–638; the sequence is VQLCKLKKKMRRKARNQEAKLEAAKKLKEIKEKEEKKQKIQKAKNQEKAKNQEKKRTRRQ. Over residues 610-632 the composition is skewed to basic and acidic residues; the sequence is EKEEKKQKIQKAKNQEKAKNQEK. One can recognise a DDT domain in the interval 701 to 766; the sequence is SCAFSDCLTT…LQAAMINPGL (66 aa). Disordered regions lie at residues 884 to 905, 1013 to 1063, 1088 to 1110, and 1123 to 1149; these read ITTTEVSLRRRSERNAEENDEL, SFGS…PLTN, TVLTPESSPPHSESTPIISSEAT, and TPCRNHNQGLSTHSSNRLSPPSPTAAT. The span at 890–900 shows a compositional bias: basic and acidic residues; it reads SLRRRSERNAE. Polar residues-rich tracts occupy residues 1023-1040 and 1051-1063; these read HPRNSTAEPEQNSTSCHC and VTDQFPNSVPLTN. Residues 1091–1108 show a composition bias toward low complexity; it reads TPESSPPHSESTPIISSE. Residues 1124 to 1149 are compositionally biased toward polar residues; the sequence is PCRNHNQGLSTHSSNRLSPPSPTAAT. The segment at residues 1204–1216 is a DNA-binding region (a.T hook 3); the sequence is EKRRGRRPSKLLK. A PHD-type zinc finger spans residues 1476 to 1526; that stretch reads KVTCLYCRKGDNDELLLLCDSCDRGCHTYCHRPRMNEIPEGDWFCPTCISL. The tract at residues 1549-1587 is disordered; it reads FTEDSPSKPSRRREHPTASQFSPGESPASKKRRMGTRSQ. The region spanning 1585–1689 is the Bromo domain; sequence RSQSPDLTFC…KFYDARWEEF (105 aa).

Belongs to the WAL family. In terms of assembly, component of the NoRC complex, at least composed of SMARCA5/SNF2H and BAZ2A/TIP5.

It localises to the nucleus. The protein resides in the nucleolus. Functionally, essential component of the NoRC (nucleolar remodeling complex) complex, a complex that mediates silencing of a fraction of rDNA by recruiting histone-modifying enzymes and DNA methyltransferases, leading to heterochromatin formation and transcriptional silencing. In the complex, it plays a central role by being recruited to rDNA and by targeting chromatin modifying enzymes such as HDAC1, leading to repress RNA polymerase I transcription. Recruited to rDNA via its interaction with TTF1 and its ability to recognize and bind histone H4 acetylated on 'Lys-16' (H4K16ac), leading to deacetylation of H4K5ac, H4K8ac, H4K12ac but not H4K16ac. Specifically binds pRNAs, 150-250 nucleotide RNAs that are complementary in sequence to the rDNA promoter; pRNA-binding is required for heterochromatin formation and rDNA silencing. The chain is Bromodomain adjacent to zinc finger domain protein 2A (baz2a) from Xenopus laevis (African clawed frog).